The sequence spans 708 residues: tRNA(Met) cytidine acetyltransferase TmcA (708 aa).

ATP is bound by residues glutamine 189, 215 to 224 (GRGKTSALGL), and arginine 357. Residues 398 to 574 (PECVEQPERL…YSLLMVRGEH (177 aa)) form the N-acetyltransferase domain. Acetyl-CoA contacts are provided by residues 502-504 (IAV) and 509-515 (QRQGIGS).

It belongs to the RNA cytidine acetyltransferase family. TmcA subfamily.

The protein resides in the cytoplasm. It carries out the reaction cytidine(34) in elongator tRNA(Met) + acetyl-CoA + ATP + H2O = N(4)-acetylcytidine(34) in elongator tRNA(Met) + ADP + phosphate + CoA + H(+). Functionally, catalyzes the formation of N(4)-acetylcytidine (ac(4)C) at the wobble position of tRNA(Met), by using acetyl-CoA as an acetyl donor and ATP (or GTP). The polypeptide is tRNA(Met) cytidine acetyltransferase TmcA (Vibrio cholerae serotype O1 (strain ATCC 39315 / El Tor Inaba N16961)).